The chain runs to 193 residues: MYSGAYSFVQISTAAYRISITRLEKTMESLQQQVAQLLEQQPTLLPAAMAEQLNVTEFDIVHALPEEMVAVVDGSHAQTILESLPEWGPVTTIMTIAGSIFEVKAPFPKGKVARGYYNLMGRDGELHGHLKLENISHVALVSKPFMGRESHYFGFFTAQGENAFKIYLGRDEKRELIPEQVARFKAMQQQHKQ.

Heme is bound at residue tyrosine 116.

As to quaternary structure, homodimer. Interacts with HutZ.

It localises to the cytoplasm. In terms of biological role, binds heme. Heme is transferred to the heme-degrading enzyme HutZ via a specific protein-protein interaction. In Vibrio cholerae serotype O1 (strain ATCC 39315 / El Tor Inaba N16961), this protein is Intracellular heme transport protein HutX.